A 416-amino-acid chain; its full sequence is Neurotensin receptor type 2 (416 aa).

The Extracellular portion of the chain corresponds to methionine 1–lysine 32. The chain crosses the membrane as a helical span at residues valine 33–histidine 55. At valine 56–arginine 64 the chain is on the cytoplasmic side. A helical transmembrane segment spans residues proline 65 to valine 87. At proline 88 to arginine 109 the chain is on the extracellular side. Cysteine 108 and cysteine 194 are disulfide-bonded. A helical membrane pass occupies residues glycine 110–alanine 131. Residues glutamate 132–arginine 154 lie on the Cytoplasmic side of the membrane. The chain crosses the membrane as a helical span at residues leucine 155–glutamine 176. Residues lysine 177 to leucine 217 lie on the Extracellular side of the membrane. Residues proline 218–tyrosine 237 form a helical membrane-spanning segment. At serine 238 to glutamine 297 the chain is on the cytoplasmic side. The chain crosses the membrane as a helical span at residues valine 298 to leucine 318. At methionine 319–histidine 337 the chain is on the extracellular side. The helical transmembrane segment at tyrosine 338 to tyrosine 358 threads the bilayer. Over asparagine 359 to valine 416 the chain is Cytoplasmic. The S-palmitoyl cysteine moiety is linked to residue cysteine 377. The residue at position 410 (serine 410) is a Phosphoserine.

This sequence belongs to the G-protein coupled receptor 1 family. Neurotensin receptor subfamily. NTSR2 sub-subfamily. Expressed maximally in the cerebellum, hippocampus, piriform cortex and neocortex of adult brain.

The protein resides in the cell membrane. In terms of biological role, receptor for the tridecapeptide neurotensin. It is associated with G proteins that activate a phosphatidylinositol-calcium second messenger system. The chain is Neurotensin receptor type 2 (Ntsr2) from Mus musculus (Mouse).